We begin with the raw amino-acid sequence, 122 residues long: Large ribosomal subunit protein uL14 (122 aa).

It belongs to the universal ribosomal protein uL14 family. As to quaternary structure, part of the 50S ribosomal subunit. Forms a cluster with proteins L3 and L19. In the 70S ribosome, L14 and L19 interact and together make contacts with the 16S rRNA in bridges B5 and B8.

Its function is as follows. Binds to 23S rRNA. Forms part of two intersubunit bridges in the 70S ribosome. The protein is Large ribosomal subunit protein uL14 of Prosthecochloris aestuarii (strain DSM 271 / SK 413).